Here is a 400-residue protein sequence, read N- to C-terminus: Betaine--homocysteine S-methyltransferase 1 (400 aa).

The Hcy-binding domain occupies 8–309; that stretch reads RGVLERLNAG…YHIRAVAEEL (302 aa). Zn(2+) is bound by residues Cys-212, Cys-294, and Cys-295.

As to quaternary structure, homotetramer. Zn(2+) serves as cofactor.

The protein resides in the cytoplasm. The enzyme catalyses L-homocysteine + glycine betaine = N,N-dimethylglycine + L-methionine. Its pathway is amine and polyamine degradation; betaine degradation; sarcosine from betaine: step 1/2. The protein operates within amino-acid biosynthesis; L-methionine biosynthesis via de novo pathway; L-methionine from L-homocysteine (BhmT route): step 1/1. Involved in the regulation of homocysteine metabolism. Converts betaine and homocysteine to dimethylglycine and methionine, respectively. This reaction is also required for the irreversible oxidation of choline. The polypeptide is Betaine--homocysteine S-methyltransferase 1 (bhmt) (Danio rerio (Zebrafish)).